The chain runs to 230 residues: Large ribosomal subunit protein uL1c (230 aa).

Belongs to the universal ribosomal protein uL1 family. As to quaternary structure, part of the 50S ribosomal subunit.

The protein localises to the plastid. Its subcellular location is the chloroplast. Binds directly to 23S rRNA. Might be involved in E site tRNA release (Potential). This Thalassiosira pseudonana (Marine diatom) protein is Large ribosomal subunit protein uL1c (rpl1).